The following is a 371-amino-acid chain: Chaperone protein DnaJ (371 aa).

The J domain occupies 5–70 (CYYEILNVSK…SKRSRYDQFG (66 aa)). A CR-type zinc finger spans residues 127 to 204 (GVEKEITIPR…CYGNGKVKKQ (78 aa)). Residues C140, C143, C156, C159, C178, C181, C192, and C195 each coordinate Zn(2+). 4 CXXCXGXG motif repeats span residues 140–147 (CDSCDGTG), 156–163 (CHACHGQG), 178–185 (CPVCNGTG), and 192–199 (CDACYGNG).

This sequence belongs to the DnaJ family. As to quaternary structure, homodimer. The cofactor is Zn(2+).

It localises to the cytoplasm. Its function is as follows. Participates actively in the response to hyperosmotic and heat shock by preventing the aggregation of stress-denatured proteins and by disaggregating proteins, also in an autonomous, DnaK-independent fashion. Unfolded proteins bind initially to DnaJ; upon interaction with the DnaJ-bound protein, DnaK hydrolyzes its bound ATP, resulting in the formation of a stable complex. GrpE releases ADP from DnaK; ATP binding to DnaK triggers the release of the substrate protein, thus completing the reaction cycle. Several rounds of ATP-dependent interactions between DnaJ, DnaK and GrpE are required for fully efficient folding. Also involved, together with DnaK and GrpE, in the DNA replication of plasmids through activation of initiation proteins. In Francisella tularensis subsp. tularensis (strain WY96-3418), this protein is Chaperone protein DnaJ.